An 89-amino-acid chain; its full sequence is Putative regulatory protein CYA_2696 (89 aa).

The protein belongs to the RemA family.

The sequence is that of Putative regulatory protein CYA_2696 from Synechococcus sp. (strain JA-3-3Ab) (Cyanobacteria bacterium Yellowstone A-Prime).